A 789-amino-acid chain; its full sequence is Ent-kaurene synthase TSP4, chloroplastic (789 aa).

Mg(2+)-binding residues include Asp540 and Asp544. The DDXXD motif motif lies at 540-544; it reads DDFFD. The chain crosses the membrane as a helical span at residues 638–656; sequence AYVSFALGPIVLPALYLVG. Residues Asn684, Arg687, and Glu692 each contribute to the Mg(2+) site.

This sequence belongs to the terpene synthase family. It depends on Mg(2+) as a cofactor. Expressed in leaves and fruits, including trichomes.

The protein localises to the plastid. It localises to the chloroplast membrane. It carries out the reaction ent-copalyl diphosphate = ent-kaur-16-ene + diphosphate. Its pathway is plant hormone biosynthesis; gibberellin biosynthesis. In terms of biological role, involved in the biosynthesis of labdane-type diterpenoid including cleroda-dienols, and peregrinol lactones and furan derivatives, dopaminergic diterpenoids that can bind to dopamine receptors in the human pituitary gland, have probably ability to lower prolactin levels, and are used to treat menstrual cycle disorders (e.g. premenstrual syndrome and mastodynia). Terpene synthase that produces ent-kaurene from ent-copalyl diphosphate. The chain is Ent-kaurene synthase TSP4, chloroplastic from Vitex agnus-castus (Chaste tree).